Consider the following 316-residue polypeptide: Polyprenyl transferase ausN (316 aa).

9 helical membrane passes run 45–65 (VVGV…TFLL), 69–89 (VILS…NDLI), 108–128 (GAVS…CGGS), 129–149 (LLLL…FFAL), 163–183 (LILT…DMNP), 188–208 (IPTL…DIVY), 233–253 (DQIA…GGIL), 256–276 (LGIP…LRFL), and 296–316 (SCLL…CVRL).

The protein belongs to the UbiA prenyltransferase family. The cofactor is Mg(2+).

Its subcellular location is the membrane. The catalysed reaction is 3,5-dimethylorsellinate + (2E,6E)-farnesyl diphosphate = (3R)-3-farnesyl-6-hydroxy-2,3,5-trimethyl-4-oxocyclohexa-1,5-diene-1-carboxylate + diphosphate + H(+). It participates in secondary metabolite biosynthesis; terpenoid biosynthesis. Its function is as follows. Polyprenyl transferase; part of the gene cluster A that mediates the biosynthesis of the fungal meroterpenoid acetoxydehydroaustin. The first step of the pathway is the synthesis of 3,5-dimethylorsellinic acid by the polyketide synthase ausA. 3,5-dimethylorsellinic acid is then prenylated by the polyprenyl transferase ausN. Further epoxidation by the FAD-dependent monooxygenase ausM and cyclization by the probable terpene cyclase ausL lead to the formation of protoaustinoid A. Protoaustinoid A is then oxidized to spiro-lactone preaustinoid A3 by the combined action of the FAD-binding monooxygenases ausB and ausC, and the dioxygenase ausE. Acid-catalyzed keto-rearrangement and ring contraction of the tetraketide portion of preaustinoid A3 by ausJ lead to the formation of preaustinoid A4. The aldo-keto reductase ausK, with the help of ausH, is involved in the next step by transforming preaustinoid A4 into isoaustinone which is in turn hydroxylated by the P450 monooxygenase ausI to form austinolide. The cytochrome P450 monooxygenase ausG then modifies austinolide to austinol. Austinol is further acetylated to austin by the O-acetyltransferase ausP, which spontaneously changes to dehydroaustin. The cytochrome P450 monooxygenase then converts dehydroaustin is into 7-dehydrodehydroaustin. The hydroxylation catalyzed by ausR permits the second O-acetyltransferase ausQ to add an additional acetyl group to the molecule, leading to the formation of acetoxydehydroaustin. Due to genetic rearrangements of the clusters and the subsequent loss of some enzymes, the end product of the Penicillium brasilianum austinoid biosynthesis clusters is acetoxydehydroaustin. The sequence is that of Polyprenyl transferase ausN from Penicillium brasilianum.